Reading from the N-terminus, the 347-residue chain is NADH-ubiquinone oxidoreductase chain 2 (347 aa).

The next 10 helical transmembrane spans lie at 3–23, 25–45, 59–79, 111–131, 149–169, 178–198, 201–221, 242–262, 274–294, and 325–345; these read PIVF…VMMS, HWLM…PILM, YFLT…INLM, FHFW…LILL, INLD…GWGG, IMAY…TYNP, TMLN…LLML, SLIL…GFIP, NSII…YFYL, and LLPT…TMSI.

Belongs to the complex I subunit 2 family. Core subunit of respiratory chain NADH dehydrogenase (Complex I) which is composed of 45 different subunits. Interacts with TMEM242.

The protein resides in the mitochondrion inner membrane. The enzyme catalyses a ubiquinone + NADH + 5 H(+)(in) = a ubiquinol + NAD(+) + 4 H(+)(out). In terms of biological role, core subunit of the mitochondrial membrane respiratory chain NADH dehydrogenase (Complex I) which catalyzes electron transfer from NADH through the respiratory chain, using ubiquinone as an electron acceptor. Essential for the catalytic activity and assembly of complex I. The protein is NADH-ubiquinone oxidoreductase chain 2 of Rhinoceros unicornis (Greater Indian rhinoceros).